We begin with the raw amino-acid sequence, 176 residues long: Inner membrane-spanning protein YciB (176 aa).

A run of 5 helical transmembrane segments spans residues 3 to 23 (FLFDLFPIILFFAAFKLWGIF), 49 to 69 (TMLWVSLGVIVVFGGATLVLH), 72 to 92 (KFIQWKPTVLYWLFAVGLVAA), 118 to 138 (KLNLAWAAFFAALGVTNLYVV), and 149 to 169 (FKLFGTTGAIVVFVILQSLWL).

This sequence belongs to the YciB family.

The protein resides in the cell inner membrane. Plays a role in cell envelope biogenesis, maintenance of cell envelope integrity and membrane homeostasis. The protein is Inner membrane-spanning protein YciB of Burkholderia mallei (strain NCTC 10247).